The primary structure comprises 199 residues: 3-isopropylmalate dehydratase small subunit (199 aa).

Belongs to the LeuD family. LeuD type 1 subfamily. Heterodimer of LeuC and LeuD.

The enzyme catalyses (2R,3S)-3-isopropylmalate = (2S)-2-isopropylmalate. The protein operates within amino-acid biosynthesis; L-leucine biosynthesis; L-leucine from 3-methyl-2-oxobutanoate: step 2/4. In terms of biological role, catalyzes the isomerization between 2-isopropylmalate and 3-isopropylmalate, via the formation of 2-isopropylmaleate. This Pseudoalteromonas translucida (strain TAC 125) protein is 3-isopropylmalate dehydratase small subunit.